The sequence spans 283 residues: Pantothenate synthetase (283 aa).

ATP is bound at residue 30–37; it reads MGALHEGH. His37 (proton donor) is an active-site residue. A (R)-pantoate-binding site is contributed by Gln61. Gln61 contributes to the beta-alanine binding site. Residue 150–153 coordinates ATP; sequence GRKD. (R)-pantoate is bound at residue Gln156. Residues Val179 and 187 to 190 each bind ATP; that span reads MSSR.

Belongs to the pantothenate synthetase family. As to quaternary structure, homodimer.

It localises to the cytoplasm. It carries out the reaction (R)-pantoate + beta-alanine + ATP = (R)-pantothenate + AMP + diphosphate + H(+). It participates in cofactor biosynthesis; (R)-pantothenate biosynthesis; (R)-pantothenate from (R)-pantoate and beta-alanine: step 1/1. In terms of biological role, catalyzes the condensation of pantoate with beta-alanine in an ATP-dependent reaction via a pantoyl-adenylate intermediate. The chain is Pantothenate synthetase from Rhodopirellula baltica (strain DSM 10527 / NCIMB 13988 / SH1).